The chain runs to 67 residues: Large ribosomal subunit protein bL35 (67 aa).

Belongs to the bacterial ribosomal protein bL35 family.

The protein is Large ribosomal subunit protein bL35 of Bartonella quintana (strain Toulouse) (Rochalimaea quintana).